The sequence spans 287 residues: 4-hydroxybenzoate octaprenyltransferase (287 aa).

9 helical membrane-spanning segments follow: residues 19 to 39, 43 to 63, 94 to 114, 118 to 138, 142 to 162, 167 to 187, 209 to 229, 235 to 255, and 263 to 283; these read PIGT…ASSG, LQML…GCAI, VVVA…LNIF, LSVL…FLAI, VLGI…LDFI, WVLF…YAMV, VLAI…VAHL, YFLI…KLVS, and FLAF…IVLG.

The protein belongs to the UbiA prenyltransferase family. Requires Mg(2+) as cofactor.

Its subcellular location is the cell inner membrane. It catalyses the reaction all-trans-octaprenyl diphosphate + 4-hydroxybenzoate = 4-hydroxy-3-(all-trans-octaprenyl)benzoate + diphosphate. It functions in the pathway cofactor biosynthesis; ubiquinone biosynthesis. Functionally, catalyzes the prenylation of para-hydroxybenzoate (PHB) with an all-trans polyprenyl group. Mediates the second step in the final reaction sequence of ubiquinone-8 (UQ-8) biosynthesis, which is the condensation of the polyisoprenoid side chain with PHB, generating the first membrane-bound Q intermediate 3-octaprenyl-4-hydroxybenzoate. In Polynucleobacter asymbioticus (strain DSM 18221 / CIP 109841 / QLW-P1DMWA-1) (Polynucleobacter necessarius subsp. asymbioticus), this protein is 4-hydroxybenzoate octaprenyltransferase.